The following is a 237-amino-acid chain: 2-C-methyl-D-erythritol 4-phosphate cytidylyltransferase (237 aa).

Belongs to the IspD/TarI cytidylyltransferase family. IspD subfamily.

The enzyme catalyses 2-C-methyl-D-erythritol 4-phosphate + CTP + H(+) = 4-CDP-2-C-methyl-D-erythritol + diphosphate. It functions in the pathway isoprenoid biosynthesis; isopentenyl diphosphate biosynthesis via DXP pathway; isopentenyl diphosphate from 1-deoxy-D-xylulose 5-phosphate: step 2/6. In terms of biological role, catalyzes the formation of 4-diphosphocytidyl-2-C-methyl-D-erythritol from CTP and 2-C-methyl-D-erythritol 4-phosphate (MEP). This Acidithiobacillus ferrooxidans (strain ATCC 23270 / DSM 14882 / CIP 104768 / NCIMB 8455) (Ferrobacillus ferrooxidans (strain ATCC 23270)) protein is 2-C-methyl-D-erythritol 4-phosphate cytidylyltransferase.